A 512-amino-acid polypeptide reads, in one-letter code: Probable amidase At4g34880 (512 aa).

Residues Lys117 and Ser198 each act as charge relay system in the active site. The active-site Acyl-ester intermediate is the Ser222.

Belongs to the amidase family. Expressed in vasculature of roots, cotyledons, leaves and sepals.

The enzyme catalyses a monocarboxylic acid amide + H2O = a monocarboxylate + NH4(+). The sequence is that of Probable amidase At4g34880 from Arabidopsis thaliana (Mouse-ear cress).